We begin with the raw amino-acid sequence, 368 residues long: MSSSNEPPRKTDQPSSSSASASASPSLFLSLPLEIISMILARVPKRYYPILCSVSKNMRSLVRSPEIHKARSLLGKDYLYIGFIDENYRPVYDYWYTLRRIENSTTENLFESIEFPYPSEPNRFSMNAVGPKIFFISESCTPSSRLSIFDTRFGELRQGPCLLVKRGYNCVGLVGGKVYVIGGYQDDEIAAESFDLNTQTWEAAPIPDEKESHRWICKANVSFDRKVCALRSREGMTCYDTRDGSCQRSEMPNDQWSRVGLCVIDNVLFVYFSRFGLMWYDSKLMLWRVVYGFDLDNARSVGIGEYYGKLAFIWEKPSLNVSESKEIWCRMIGLLRSEVGIHGAAEPSQLVEIVPNGYRMCHCLSLSG.

Residues 1–23 form a disordered region; it reads MSSSNEPPRKTDQPSSSSASASA. Residues 14–23 show a composition bias toward low complexity; it reads PSSSSASASA. The F-box domain maps to 25 to 71; it reads PSLFLSLPLEIISMILARVPKRYYPILCSVSKNMRSLVRSPEIHKAR. The Kelch repeat unit spans residues 177-221; it reads KVYVIGGYQDDEIAAESFDLNTQTWEAAPIPDEKESHRWICKANV.

The sequence is that of F-box/kelch-repeat protein At2g44700 from Arabidopsis thaliana (Mouse-ear cress).